A 130-amino-acid polypeptide reads, in one-letter code: 3-aminoacrylate deaminase RutC (130 aa).

This sequence belongs to the RutC family.

It catalyses the reaction (Z)-3-aminoacrylate + H2O + H(+) = 3-oxopropanoate + NH4(+). In terms of biological role, involved in pyrimidine catabolism. Catalyzes the deamination of 3-aminoacrylate to malonic semialdehyde, a reaction that can also occur spontaneously. RutC may facilitate the reaction and modulate the metabolic fitness, rather than catalyzing essential functions. The sequence is that of 3-aminoacrylate deaminase RutC from Klebsiella pneumoniae (strain 342).